A 33-amino-acid chain; its full sequence is Protein YtiC (33 aa).

A helical membrane pass occupies residues 10-29; the sequence is FDMLSIYIIYKLIVSNNTWL.

It localises to the cell inner membrane. This chain is Protein YtiC, found in Escherichia coli (strain K12).